The primary structure comprises 304 residues: Quinolinate synthase (304 aa).

Iminosuccinate contacts are provided by histidine 24 and serine 41. Position 86 (cysteine 86) interacts with [4Fe-4S] cluster. Residues 112–114 (YVN) and serine 129 each bind iminosuccinate. Cysteine 171 contributes to the [4Fe-4S] cluster binding site. Residues 197 to 199 (HPE) and threonine 214 contribute to the iminosuccinate site. Cysteine 259 provides a ligand contact to [4Fe-4S] cluster.

Belongs to the quinolinate synthase family. Type 2 subfamily. [4Fe-4S] cluster serves as cofactor.

The protein resides in the cytoplasm. The enzyme catalyses iminosuccinate + dihydroxyacetone phosphate = quinolinate + phosphate + 2 H2O + H(+). It functions in the pathway cofactor biosynthesis; NAD(+) biosynthesis; quinolinate from iminoaspartate: step 1/1. Catalyzes the condensation of iminoaspartate with dihydroxyacetone phosphate to form quinolinate. The sequence is that of Quinolinate synthase from Geobacter sp. (strain M21).